Here is a 108-residue protein sequence, read N- to C-terminus: Parvalbumin beta (108 aa).

Ala1 bears the N-acetylalanine mark. A disulfide bridge links Cys11 with Cys33. EF-hand domains lie at 38 to 73 (KSAD…FKAG) and 77 to 108 (LTDA…LVKA). The Ca(2+) site is built by Asp51, Asp53, Ser55, Phe57, Glu59, Glu62, Asp90, Asp92, Asp94, Ala96, and Glu101.

The protein belongs to the parvalbumin family.

Its function is as follows. In muscle, parvalbumin is thought to be involved in relaxation after contraction. It binds two calcium ions. In Merlangius merlangus (Whiting), this protein is Parvalbumin beta.